Consider the following 734-residue polypeptide: Methionine--tRNA ligase (734 aa).

The short motif at 12–22 (PYVNNIPHLGN) is the 'HIGH' region element. 4 residues coordinate Zn(2+): cysteine 143, cysteine 146, cysteine 155, and cysteine 158. Positions 330–334 (KFSKS) match the 'KMSKS' region motif. Lysine 333 contributes to the ATP binding site. Residues 570–675 (FREKVLLRVV…QNPIAGERII (106 aa)) form the tRNA-binding domain.

This sequence belongs to the class-I aminoacyl-tRNA synthetase family. MetG type 1 subfamily. Homodimer. Zn(2+) serves as cofactor.

The protein resides in the cytoplasm. The enzyme catalyses tRNA(Met) + L-methionine + ATP = L-methionyl-tRNA(Met) + AMP + diphosphate. Functionally, is required not only for elongation of protein synthesis but also for the initiation of all mRNA translation through initiator tRNA(fMet) aminoacylation. In Borreliella burgdorferi (strain ZS7) (Borrelia burgdorferi), this protein is Methionine--tRNA ligase.